A 1291-amino-acid chain; its full sequence is GRB10-interacting GYF protein 2 (1291 aa).

Ala-2 is modified (N-acetylalanine). Phosphoserine occurs at positions 19, 26, and 30. Omega-N-methylarginine occurs at positions 107, 119, and 121. The disordered stretch occupies residues 112–132 (GTVVGAPRGRSSSRGRGRGRG). The residue at position 140 (Ser-140) is a Phosphoserine. 3 disordered regions span residues 148–196 (FGRG…RKHE), 209–248 (REEQ…GWRE), and 267–484 (RGYR…TEPD). Arg-150 is modified (omega-N-methylarginine). Positions 152–183 (GGREMHRSQSWEERGDRRFEKPGRKDVGRPNF) are enriched in basic and acidic residues. Phosphoserine is present on residues Ser-161, Ser-190, and Ser-237. Basic and acidic residues predominate over residues 226–248 (SRRDGERWRPHSPDGPRSTGWRE). Positions 281–311 (DDRDSLPEWCLEDAEEEMGTFDSSGAFLSLK) match the DDX6 binding motif motif. Acidic residues predominate over residues 290–299 (CLEDAEEEMG). Residues 313–364 (VQKEPIPEEQEMDFRPVEEGEERSDSDSSHNEEAKEPDKTNRREGEKTDRAG) are compositionally biased toward basic and acidic residues. A compositionally biased stretch (polar residues) spans 371 to 393 (VPQTSLSSARPGTPSDHQPQEAT). Residue Thr-383 is modified to Phosphothreonine. The segment covering 394 to 415 (QFERKDEPKAEQVEKAEEENRS) has biased composition (basic and acidic residues). The region spanning 534–582 (MQKWYYKDPQGEIQGPFNNQEMAEWFQAGYFTMSLLVKRACDESFQPLG) is the GYF domain. The tract at residues 548–564 (GPFNNQEMAEWFQAGYF) is required for GRB10-binding. Ser-594 bears the Phosphoserine mark. Disordered regions lie at residues 732–794 (KAKA…QEEA), 846–937 (EEAA…SNTA), 958–998 (ERQL…SKPA), 1011–1053 (EARQ…SVWG), and 1090–1118 (KEVG…NRQN). Residues 846–898 (EEAAKWAREEEEAQRRLEENRLRMEEEAARLRHEEEERKRKELELQRQKDLMR) show a composition bias toward basic and acidic residues. A compositionally biased stretch (low complexity) spans 899 to 924 (QRQQQQEALRRLQQQQQQQQLAQMKL). Over residues 925–937 (PSSSTWGQQSNTA) the composition is skewed to polar residues. A compositionally biased stretch (basic and acidic residues) spans 958 to 973 (ERQLREEQRRQQRELM). Over residues 977 to 986 (QQQQQQQQQQ) the composition is skewed to low complexity. Residue Ser-995 is modified to Phosphoserine. Residues 1015-1031 (MQKQQQQQQQQQQQHQQ) show a composition bias toward low complexity. Over residues 1032 to 1053 (SNRARNSTHSNLHTSLGNSVWG) the composition is skewed to polar residues. A compositionally biased stretch (low complexity) spans 1096–1110 (NSTNKNKNNASLSKS). Residue Lys-1129 forms a Glycyl lysine isopeptide (Lys-Gly) (interchain with G-Cter in SUMO2) linkage. Disordered regions lie at residues 1202–1223 (AKQK…QDSV) and 1239–1263 (QSNN…KMVR). Low complexity predominate over residues 1208-1220 (QQRQQQQQQQQQQ). A Phosphoserine modification is found at Ser-1276.

It belongs to the GIGYF family. As to quaternary structure, component of the 4EHP-GYF2 complex, at least composed of EIF4E2, GIGYF2 and ZNF598. Interacts (via the 4EHP-binding motif) with EIF4E2; the interaction is direct. Interacts with ZFP36/TTP (via P-P-P-P-G repeats); the interaction is direct. Interacts with GRB10. Interacts (via DDX6 motif) with DDX6 (via RecA-like domain 2). Expressed in heart, liver, kidney and brain as well as in testis.

In terms of biological role, key component of the 4EHP-GYF2 complex, a multiprotein complex that acts as a repressor of translation initiation. In the 4EHP-GYF2 complex, acts as a factor that bridges EIF4E2 to ZFP36/TTP, linking translation repression with mRNA decay. Also recruits and bridges the association of the 4EHP complex with the decapping effector protein DDX6, which is required for the ZFP36/TTP-mediated down-regulation of AU-rich mRNA. May act cooperatively with GRB10 to regulate tyrosine kinase receptor signaling, including IGF1 and insulin receptors. In association with EIF4E2, assists ribosome-associated quality control (RQC) by sequestering the mRNA cap, blocking ribosome initiation and decreasing the translational load on problematic messages. Part of a pathway that works in parallel to RQC-mediated degradation of the stalled nascent polypeptide. GIGYF2 and EIF4E2 work downstream and independently of ZNF598, which seems to work as a scaffold that can recruit them to faulty mRNA even if alternative recruitment mechanisms may exist. The sequence is that of GRB10-interacting GYF protein 2 from Mus musculus (Mouse).